A 311-amino-acid polypeptide reads, in one-letter code: tRNA(Ile)-lysidine synthase (311 aa).

32–37 (SGGPDS) contacts ATP.

This sequence belongs to the tRNA(Ile)-lysidine synthase family.

It localises to the cytoplasm. The catalysed reaction is cytidine(34) in tRNA(Ile2) + L-lysine + ATP = lysidine(34) in tRNA(Ile2) + AMP + diphosphate + H(+). Functionally, ligates lysine onto the cytidine present at position 34 of the AUA codon-specific tRNA(Ile) that contains the anticodon CAU, in an ATP-dependent manner. Cytidine is converted to lysidine, thus changing the amino acid specificity of the tRNA from methionine to isoleucine. The protein is tRNA(Ile)-lysidine synthase of Cutibacterium acnes (strain DSM 16379 / KPA171202) (Propionibacterium acnes).